A 98-amino-acid polypeptide reads, in one-letter code: MRTYEIMYIVRPNIEEDAKKALVERFNGILASEGSEVLEEKDWGKRRLAYEINDFKEGFYNIVRIKTDNNKSTDEFQRLAKINDDIIRYIVIREDQDK.

This sequence belongs to the bacterial ribosomal protein bS6 family.

In terms of biological role, binds together with bS18 to 16S ribosomal RNA. In Staphylococcus epidermidis (strain ATCC 35984 / DSM 28319 / BCRC 17069 / CCUG 31568 / BM 3577 / RP62A), this protein is Small ribosomal subunit protein bS6.